The chain runs to 503 residues: Probable cytosol aminopeptidase (503 aa).

Residues Lys270 and Asp275 each coordinate Mn(2+). The active site involves Lys282. 3 residues coordinate Mn(2+): Asp293, Asp352, and Glu354. Arg356 is a catalytic residue.

This sequence belongs to the peptidase M17 family. Requires Mn(2+) as cofactor.

The protein resides in the cytoplasm. The enzyme catalyses Release of an N-terminal amino acid, Xaa-|-Yaa-, in which Xaa is preferably Leu, but may be other amino acids including Pro although not Arg or Lys, and Yaa may be Pro. Amino acid amides and methyl esters are also readily hydrolyzed, but rates on arylamides are exceedingly low.. It carries out the reaction Release of an N-terminal amino acid, preferentially leucine, but not glutamic or aspartic acids.. Its function is as follows. Presumably involved in the processing and regular turnover of intracellular proteins. Catalyzes the removal of unsubstituted N-terminal amino acids from various peptides. In Shigella boydii serotype 18 (strain CDC 3083-94 / BS512), this protein is Probable cytosol aminopeptidase.